Here is a 426-residue protein sequence, read N- to C-terminus: Serine--tRNA ligase (426 aa).

The interval 36–66 (KRRHLQERTQDLQSQRNTISKEIGQKKAKGE) is disordered. The segment covering 46 to 55 (DLQSQRNTIS) has biased composition (polar residues). 233–235 (TAE) provides a ligand contact to L-serine. An ATP-binding site is contributed by 264–266 (RSE). Glu287 serves as a coordination point for L-serine. Position 351–354 (351–354 (EISS)) interacts with ATP. L-serine is bound at residue Ser387.

The protein belongs to the class-II aminoacyl-tRNA synthetase family. Type-1 seryl-tRNA synthetase subfamily. As to quaternary structure, homodimer. The tRNA molecule binds across the dimer.

The protein resides in the cytoplasm. The enzyme catalyses tRNA(Ser) + L-serine + ATP = L-seryl-tRNA(Ser) + AMP + diphosphate + H(+). It carries out the reaction tRNA(Sec) + L-serine + ATP = L-seryl-tRNA(Sec) + AMP + diphosphate + H(+). It functions in the pathway aminoacyl-tRNA biosynthesis; selenocysteinyl-tRNA(Sec) biosynthesis; L-seryl-tRNA(Sec) from L-serine and tRNA(Sec): step 1/1. Catalyzes the attachment of serine to tRNA(Ser). Is also able to aminoacylate tRNA(Sec) with serine, to form the misacylated tRNA L-seryl-tRNA(Sec), which will be further converted into selenocysteinyl-tRNA(Sec). The polypeptide is Serine--tRNA ligase (Francisella tularensis subsp. novicida (strain U112)).